The following is a 310-amino-acid chain: Protein translocase subunit SecF (310 aa).

The next 6 membrane-spanning stretches (helical) occupy residues Phe20–Tyr42, Ile140–Val160, Trp164–Phe184, Leu194–Ile214, Ile246–Ala266, and Val272–Ile292.

It belongs to the SecD/SecF family. SecF subfamily. As to quaternary structure, forms a complex with SecD. Part of the essential Sec protein translocation apparatus which comprises SecA, SecYEG and auxiliary proteins SecDF-YajC and YidC.

Its subcellular location is the cell inner membrane. Its function is as follows. Part of the Sec protein translocase complex. Interacts with the SecYEG preprotein conducting channel. SecDF uses the proton motive force (PMF) to complete protein translocation after the ATP-dependent function of SecA. This is Protein translocase subunit SecF from Rickettsia canadensis (strain McKiel).